A 196-amino-acid polypeptide reads, in one-letter code: DnaA initiator-associating protein DiaA (196 aa).

Residues 34–196 (MVQSLLNGNK…DNTLFPHQND (163 aa)) enclose the SIS domain.

Belongs to the SIS family. DiaA subfamily. In terms of assembly, homotetramer; dimer of dimers.

In terms of biological role, required for the timely initiation of chromosomal replication via direct interactions with the DnaA initiator protein. The chain is DnaA initiator-associating protein DiaA from Pectobacterium atrosepticum (strain SCRI 1043 / ATCC BAA-672) (Erwinia carotovora subsp. atroseptica).